Reading from the N-terminus, the 213-residue chain is ATP phosphoribosyltransferase (213 aa).

The protein belongs to the ATP phosphoribosyltransferase family. Short subfamily. Heteromultimer composed of HisG and HisZ subunits.

It localises to the cytoplasm. The catalysed reaction is 1-(5-phospho-beta-D-ribosyl)-ATP + diphosphate = 5-phospho-alpha-D-ribose 1-diphosphate + ATP. It participates in amino-acid biosynthesis; L-histidine biosynthesis; L-histidine from 5-phospho-alpha-D-ribose 1-diphosphate: step 1/9. Catalyzes the condensation of ATP and 5-phosphoribose 1-diphosphate to form N'-(5'-phosphoribosyl)-ATP (PR-ATP). Has a crucial role in the pathway because the rate of histidine biosynthesis seems to be controlled primarily by regulation of HisG enzymatic activity. In Listeria monocytogenes serovar 1/2a (strain ATCC BAA-679 / EGD-e), this protein is ATP phosphoribosyltransferase (hisG).